The chain runs to 394 residues: MSVQEITIPAPADFHVHLRQGKMSELVTPHVAEGGVSLAYVMPNLVPPITSTQQAMEYLERLRALAPQTMFVGTLYLSPDLTPAEIAKAAQNGVRGVKSYPRGVTTNSDSGIEDYETYYPIFEEMQKHDMVLNLHGELPSNADAGICVLNAEEKFLTHLFKIHGEFPKLKIVLEHATTRKAVEAVKQCGDTVGCTITPHHLELIVDDWAGKPLNFCKPVAKYPDDRQALRDVIRQGHPRFFLGSDSAPHPLANKYPSAVTHGAPGTKASASGSDHLEATGVVSCGCAAGVYTSSILVPLCATLLEAFGALDQLANYVSINGRNFYGYNDDQHAKHGSIKLRKVRSRSSISPAAATVPAVYVHPEFREVPDSDASKVQVVPFWAGKCLGWEIVRS.

Residues His-15, His-17, Lys-98, His-135, His-175, and Asp-245 each coordinate Zn(2+). An N6-carboxylysine modification is found at Lys-98.

The protein belongs to the metallo-dependent hydrolases superfamily. DHOase family. Class II DHOase subfamily. It depends on Zn(2+) as a cofactor.

It catalyses the reaction (S)-dihydroorotate + H2O = N-carbamoyl-L-aspartate + H(+). Its pathway is pyrimidine metabolism; UMP biosynthesis via de novo pathway; (S)-dihydroorotate from bicarbonate: step 3/3. This Mycosarcoma maydis (Corn smut fungus) protein is Dihydroorotase (PYR3).